The primary structure comprises 388 residues: Succinate--CoA ligase [ADP-forming] subunit beta (388 aa).

The ATP-grasp domain occupies 9–244 (KSLFAEYGLP…PSQDDAREAH (236 aa)). ATP is bound by residues K46, 53-55 (GRG), E99, T102, and E107. Mg(2+)-binding residues include N199 and D213. Substrate contacts are provided by residues N264 and 321–323 (GIV).

This sequence belongs to the succinate/malate CoA ligase beta subunit family. In terms of assembly, heterotetramer of two alpha and two beta subunits. Mg(2+) serves as cofactor.

The enzyme catalyses succinate + ATP + CoA = succinyl-CoA + ADP + phosphate. It carries out the reaction GTP + succinate + CoA = succinyl-CoA + GDP + phosphate. It functions in the pathway carbohydrate metabolism; tricarboxylic acid cycle; succinate from succinyl-CoA (ligase route): step 1/1. Succinyl-CoA synthetase functions in the citric acid cycle (TCA), coupling the hydrolysis of succinyl-CoA to the synthesis of either ATP or GTP and thus represents the only step of substrate-level phosphorylation in the TCA. The beta subunit provides nucleotide specificity of the enzyme and binds the substrate succinate, while the binding sites for coenzyme A and phosphate are found in the alpha subunit. This chain is Succinate--CoA ligase [ADP-forming] subunit beta, found in Shewanella frigidimarina (strain NCIMB 400).